Here is a 219-residue protein sequence, read N- to C-terminus: Small ribosomal subunit protein uS2m (219 aa).

Belongs to the universal ribosomal protein uS2 family. As to quaternary structure, component of the mitochondrial ribosome small subunit.

The protein localises to the mitochondrion. The chain is Small ribosomal subunit protein uS2m (RPS2) from Arabidopsis thaliana (Mouse-ear cress).